A 149-amino-acid chain; its full sequence is Ribonuclease pancreatic (149 aa).

A signal peptide spans 1–25; that stretch reads MGLEKSLILFPLFFLLLGWVQPSLG. Substrate is bound by residues Lys32 and Arg35. The Proton acceptor role is filled by His37. 4 disulfides stabilise this stretch: Cys51-Cys109, Cys65-Cys120, Cys83-Cys135, and Cys90-Cys97. Substrate contacts are provided by residues 66–70 and Lys91; that span reads KPVNT. Catalysis depends on His144, which acts as the Proton donor.

This sequence belongs to the pancreatic ribonuclease family. Monomer. Interacts with and forms tight 1:1 complexes with RNH1. Dimerization of two such complexes may occur. Interaction with RNH1 inhibits this protein. Pancreas.

It is found in the secreted. It catalyses the reaction an [RNA] containing cytidine + H2O = an [RNA]-3'-cytidine-3'-phosphate + a 5'-hydroxy-ribonucleotide-3'-[RNA].. It carries out the reaction an [RNA] containing uridine + H2O = an [RNA]-3'-uridine-3'-phosphate + a 5'-hydroxy-ribonucleotide-3'-[RNA].. Functionally, endonuclease that catalyzes the cleavage of RNA on the 3' side of pyrimidine nucleotides. Acts on single-stranded and double-stranded RNA. The polypeptide is Ribonuclease pancreatic (Rnase1) (Mus musculus (Mouse)).